Consider the following 133-residue polypeptide: Fatty acid-binding protein, heart (133 aa).

Position 2 is an N-acetylvaline (Val2). The residue at position 8 (Thr8) is a Phosphothreonine. Tyr20 carries the phosphotyrosine; by Tyr-kinases modification. The residue at position 23 (Ser23) is a Phosphoserine. Position 30 is a phosphothreonine (Thr30). At Ser83 the chain carries Phosphoserine. Residue 127-129 (RTY) coordinates (9Z)-octadecenoate. 127–129 (RTY) contributes to the hexadecanoate binding site. 127-129 (RTY) is a binding site for octadecanoate.

It belongs to the calycin superfamily. Fatty-acid binding protein (FABP) family.

The protein localises to the cytoplasm. Its function is as follows. FABPs are thought to play a role in the intracellular transport of long-chain fatty acids and their acyl-CoA esters. This chain is Fatty acid-binding protein, heart (FABP3), found in Homo sapiens (Human).